A 117-amino-acid chain; its full sequence is Large ribosomal subunit protein uL18 (117 aa).

The protein belongs to the universal ribosomal protein uL18 family. In terms of assembly, part of the 50S ribosomal subunit; part of the 5S rRNA/L5/L18/L25 subcomplex. Contacts the 5S and 23S rRNAs.

Its function is as follows. This is one of the proteins that bind and probably mediate the attachment of the 5S RNA into the large ribosomal subunit, where it forms part of the central protuberance. The polypeptide is Large ribosomal subunit protein uL18 (Edwardsiella ictaluri (strain 93-146)).